Consider the following 89-residue polypeptide: MGIKLINIGFGNIVSANRLVAIVSPESAPIKRIIQEARDRGMLIDATYGRRTRAVIITDSDHVILSAVQPETVAHRLSTKDEVVDEVDE.

This sequence belongs to the RemA family.

The sequence is that of Putative regulatory protein CLL_A1210 from Clostridium botulinum (strain Eklund 17B / Type B).